The primary structure comprises 225 residues: Mitochondrial inner membrane protease ATP23 (225 aa).

His-124 is an a divalent metal cation binding site. The active site involves Glu-125. His-128 contributes to the a divalent metal cation binding site.

The protein belongs to the peptidase M76 family.

The protein resides in the mitochondrion inner membrane. Its function is as follows. Has a dual role in the assembly of mitochondrial ATPase. Acts as a protease that removes N-terminal residues of mitochondrial ATPase CF(0) subunit 6 at the intermembrane space side. Also involved in the correct assembly of the membrane-embedded ATPase CF(0) particle, probably mediating association of subunit 6 with the subunit 9 ring. The polypeptide is Mitochondrial inner membrane protease ATP23 (ATP23) (Candida glabrata (strain ATCC 2001 / BCRC 20586 / JCM 3761 / NBRC 0622 / NRRL Y-65 / CBS 138) (Yeast)).